The chain runs to 267 residues: Glutamate racemase (267 aa).

Substrate is bound by residues 9-10 and 41-42; these read DS and YS. The Proton donor/acceptor role is filled by cysteine 73. Substrate is bound at residue 74–75; it reads NT. Cysteine 184 functions as the Proton donor/acceptor in the catalytic mechanism. 185 to 186 lines the substrate pocket; sequence TH.

The protein belongs to the aspartate/glutamate racemases family.

The catalysed reaction is L-glutamate = D-glutamate. The protein operates within cell wall biogenesis; peptidoglycan biosynthesis. Its function is as follows. Provides the (R)-glutamate required for cell wall biosynthesis. This chain is Glutamate racemase, found in Actinobacillus pleuropneumoniae serotype 7 (strain AP76).